The sequence spans 205 residues: Holliday junction branch migration complex subunit RuvA (205 aa).

A domain I region spans residues 1 to 63; that stretch reads MIDFVEGTLS…EDAILLYGFA (63 aa). The segment at 64–142 is domain II; it reads TRDERDLFRK…GYTPSAILTV (79 aa). Residues 143–153 form a flexible linker region; it reads AAGDLTAGEQA. Residues 153–205 are domain III; that stretch reads AVSALNEALDALTALGYSDGELQKIRNTLSEKSKEGDGVEKLIKQGLALLMRG.

Belongs to the RuvA family. As to quaternary structure, homotetramer. Forms an RuvA(8)-RuvB(12)-Holliday junction (HJ) complex. HJ DNA is sandwiched between 2 RuvA tetramers; dsDNA enters through RuvA and exits via RuvB. An RuvB hexamer assembles on each DNA strand where it exits the tetramer. Each RuvB hexamer is contacted by two RuvA subunits (via domain III) on 2 adjacent RuvB subunits; this complex drives branch migration. In the full resolvosome a probable DNA-RuvA(4)-RuvB(12)-RuvC(2) complex forms which resolves the HJ.

Its subcellular location is the cytoplasm. The RuvA-RuvB-RuvC complex processes Holliday junction (HJ) DNA during genetic recombination and DNA repair, while the RuvA-RuvB complex plays an important role in the rescue of blocked DNA replication forks via replication fork reversal (RFR). RuvA specifically binds to HJ cruciform DNA, conferring on it an open structure. The RuvB hexamer acts as an ATP-dependent pump, pulling dsDNA into and through the RuvAB complex. HJ branch migration allows RuvC to scan DNA until it finds its consensus sequence, where it cleaves and resolves the cruciform DNA. This Brevibacillus brevis (strain 47 / JCM 6285 / NBRC 100599) protein is Holliday junction branch migration complex subunit RuvA.